Here is a 3462-residue protein sequence, read N- to C-terminus: Extracellular matrix-binding protein EbhA (3462 aa).

The segment covering methionine 1–asparagine 19 has biased composition (polar residues). The disordered stretch occupies residues methionine 1–valine 21. 19 FIVAR domains span residues alanine 24 to alanine 82, alanine 150 to alanine 208, alanine 276 to alanine 334, alanine 402 to alanine 460, alanine 528 to alanine 586, alanine 654 to alanine 712, alanine 780 to alanine 838, alanine 906 to alanine 964, alanine 1032 to glutamate 1093, alanine 1158 to alanine 1216, alanine 1284 to alanine 1342, alanine 1410 to alanine 1467, leucine 1535 to alanine 1593, alanine 1661 to leucine 1719, alanine 1787 to leucine 1845, alanine 1913 to valine 1971, serine 2039 to alanine 2093, alanine 2161 to leucine 2220, and alanine 2415 to alanine 2471. Residues valine 3267–alanine 3289 form a helical membrane-spanning segment. Residues arginine 3365–lysine 3462 form a disordered region. 2 stretches are compositionally biased toward basic and acidic residues: residues threonine 3380 to histidine 3390 and glutamine 3429 to serine 3439. A compositionally biased stretch (basic residues) spans threonine 3444–lysine 3462.

The protein localises to the cell membrane. This is Extracellular matrix-binding protein EbhA (ebhA) from Staphylococcus aureus (strain Newman).